The primary structure comprises 4047 residues: Cubilin homolog (4047 aa).

An N-terminal signal peptide occupies residues methionine 1–serine 22. Asparagine 56, asparagine 92, and asparagine 127 each carry an N-linked (GlcNAc...) asparagine glycan. The region spanning alanine 168 to glutamate 205 is the EGF-like 1 domain. Cystine bridges form between cysteine 172–cysteine 183, cysteine 177–cysteine 193, cysteine 195–cysteine 204, cysteine 211–cysteine 227, cysteine 221–cysteine 236, cysteine 238–cysteine 247, cysteine 310–cysteine 321, cysteine 315–cysteine 330, cysteine 333–cysteine 344, cysteine 350–cysteine 363, cysteine 357–cysteine 372, cysteine 375–cysteine 386, cysteine 392–cysteine 403, cysteine 397–cysteine 418, cysteine 420–cysteine 434, cysteine 442–cysteine 453, cysteine 447–cysteine 463, cysteine 465–cysteine 474, cysteine 480–cysteine 491, cysteine 485–cysteine 500, cysteine 502–cysteine 511, cysteine 518–cysteine 544, cysteine 577–cysteine 601, cysteine 645–cysteine 667, cysteine 696–cysteine 719, and cysteine 769–cysteine 801. The EGF-like 2; calcium-binding domain occupies aspartate 207–glutamine 248. Asparagine 215 and asparagine 224 each carry an N-linked (GlcNAc...) asparagine glycan. Residues aspartate 306 to isoleucine 345 enclose the EGF-like 3; calcium-binding domain. The EGF-like 4; calcium-binding domain maps to aspartate 346 to valine 387. EGF-like domains are found at residues lysine 388 to valine 435, alanine 438 to glutamate 475, and lysine 476 to glutamate 512. CUB domains follow at residues cysteine 518–valine 641, cysteine 645–threonine 763, cysteine 769–leucine 934, leucine 934–serine 1061, cysteine 1065–valine 1182, cysteine 1188–isoleucine 1300, cysteine 1304–leucine 1427, cysteine 1428–leucine 1558, cysteine 1560–valine 1680, and cysteine 1691–lysine 1841. 3 N-linked (GlcNAc...) asparagine glycosylation sites follow: asparagine 528, asparagine 537, and asparagine 583. N-linked (GlcNAc...) asparagine glycans are attached at residues asparagine 775, asparagine 806, and asparagine 811. The cysteines at positions 877 and 896 are disulfide-linked. Residue asparagine 942 is glycosylated (N-linked (GlcNAc...) asparagine). Disulfide bonds link cysteine 1065–cysteine 1091, cysteine 1120–cysteine 1145, and cysteine 1188–cysteine 1211. Asparagine 1133 is a glycosylation site (N-linked (GlcNAc...) asparagine). A glycan (N-linked (GlcNAc...) asparagine) is linked at asparagine 1229. Cysteines 1234 and 1262 form a disulfide. Residue asparagine 1294 is glycosylated (N-linked (GlcNAc...) asparagine). A disulfide bridge connects residues cysteine 1304 and cysteine 1330. Asparagine 1353 is a glycosylation site (N-linked (GlcNAc...) asparagine). Intrachain disulfides connect cysteine 1428–cysteine 1455, cysteine 1488–cysteine 1522, and cysteine 1560–cysteine 1586. Residue asparagine 1513 is glycosylated (N-linked (GlcNAc...) asparagine). N-linked (GlcNAc...) asparagine glycosylation is found at asparagine 1613, asparagine 1631, asparagine 1648, and asparagine 1674. A disulfide bridge links cysteine 1614 with cysteine 1641. Cysteine 1691 and cysteine 1720 are disulfide-bonded. 4 N-linked (GlcNAc...) asparagine glycosylation sites follow: asparagine 1762, asparagine 1782, asparagine 1866, and asparagine 1890. Cysteine 1955 and cysteine 1979 are oxidised to a cystine. The CUB 11 domain maps to cysteine 1955–valine 2083. N-linked (GlcNAc...) asparagine glycosylation is found at asparagine 2005, asparagine 2016, and asparagine 2017. A disulfide bridge links cysteine 2006 with cysteine 2027. The segment at alanine 2052–asparagine 2071 is disordered. Positions glycine 2055–glutamine 2067 are enriched in acidic residues. The N-linked (GlcNAc...) asparagine glycan is linked to asparagine 2193. 2 cysteine pairs are disulfide-bonded: cysteine 2207–cysteine 2238 and cysteine 2265–cysteine 2295. 5 CUB domains span residues cysteine 2207 to threonine 2334, cysteine 2335 to glutamine 2463, cysteine 2467 to alanine 2588, cysteine 2590 to serine 2717, and cysteine 2721 to isoleucine 2859. Asparagine 2301 and asparagine 2305 each carry an N-linked (GlcNAc...) asparagine glycan. Intrachain disulfides connect cysteine 2335/cysteine 2368 and cysteine 2395/cysteine 2424. Asparagine 2434 carries an N-linked (GlcNAc...) asparagine glycan. 2 cysteine pairs are disulfide-bonded: cysteine 2467–cysteine 2498 and cysteine 2590–cysteine 2619. N-linked (GlcNAc...) asparagine glycosylation is found at asparagine 2599, asparagine 2645, asparagine 2657, and asparagine 2692. The cysteines at positions 2646 and 2668 are disulfide-linked. Disulfide bonds link cysteine 2721/cysteine 2747 and cysteine 2786/cysteine 2809. 4 N-linked (GlcNAc...) asparagine glycosylation sites follow: asparagine 2811, asparagine 2845, asparagine 2875, and asparagine 2988. 4 cysteine pairs are disulfide-bonded: cysteine 2996/cysteine 3025, cysteine 3052/cysteine 3074, cysteine 3127/cysteine 3154, and cysteine 3181/cysteine 3217. 7 consecutive CUB domains span residues cysteine 2996–leucine 3121, cysteine 3127–glutamate 3254, cysteine 3255–asparagine 3385, cysteine 3387–serine 3508, cysteine 3515–valine 3641, cysteine 3645–leucine 3783, and cysteine 3786–valine 3900. Asparagine 3235 is a glycosylation site (N-linked (GlcNAc...) asparagine). 3 disulfides stabilise this stretch: cysteine 3255–cysteine 3281, cysteine 3315–cysteine 3335, and cysteine 3387–cysteine 3418. Asparagine 3421 and asparagine 3461 each carry an N-linked (GlcNAc...) asparagine glycan. Intrachain disulfides connect cysteine 3445–cysteine 3468 and cysteine 3515–cysteine 3544. Asparagine 3635 is a glycosylation site (N-linked (GlcNAc...) asparagine). 2 cysteine pairs are disulfide-bonded: cysteine 3645/cysteine 3680 and cysteine 3708/cysteine 3742. N-linked (GlcNAc...) asparagine glycosylation is found at asparagine 3770, asparagine 3787, asparagine 3812, asparagine 3858, and asparagine 3930. 2 disulfides stabilise this stretch: cysteine 3786/cysteine 3815 and cysteine 3845/cysteine 3863.

The protein localises to the secreted. Functionally, cotransporter which plays a role in lipoprotein, vitamin and iron metabolism, by facilitating their uptake. This is Cubilin homolog from Caenorhabditis elegans.